Reading from the N-terminus, the 116-residue chain is Large ribosomal subunit protein bL19 (116 aa).

This sequence belongs to the bacterial ribosomal protein bL19 family.

Functionally, this protein is located at the 30S-50S ribosomal subunit interface and may play a role in the structure and function of the aminoacyl-tRNA binding site. The protein is Large ribosomal subunit protein bL19 of Pseudothermotoga lettingae (strain ATCC BAA-301 / DSM 14385 / NBRC 107922 / TMO) (Thermotoga lettingae).